The chain runs to 397 residues: Phosphoglycerate kinase (397 aa).

Residues 26–28 (DLN), arginine 42, 65–68 (HLGR), arginine 119, and arginine 152 each bind substrate. ATP contacts are provided by residues lysine 203, glutamate 325, and 351-354 (GGDT).

Belongs to the phosphoglycerate kinase family. Monomer.

It is found in the cytoplasm. The enzyme catalyses (2R)-3-phosphoglycerate + ATP = (2R)-3-phospho-glyceroyl phosphate + ADP. It functions in the pathway carbohydrate degradation; glycolysis; pyruvate from D-glyceraldehyde 3-phosphate: step 2/5. This chain is Phosphoglycerate kinase, found in Bordetella bronchiseptica (strain ATCC BAA-588 / NCTC 13252 / RB50) (Alcaligenes bronchisepticus).